The primary structure comprises 101 residues: uncharacterized protein (101 aa).

The signal sequence occupies residues 1–18; the sequence is MSINALLYVLSLALLIWT. Residues 62 to 82 form a helical membrane-spanning segment; the sequence is FQFDSIPSSSLSLSPFPFLFF.

Its subcellular location is the membrane. This is an uncharacterized protein from Saccharomyces cerevisiae (strain ATCC 204508 / S288c) (Baker's yeast).